The sequence spans 65 residues: Large ribosomal subunit protein bL35 (65 aa).

This sequence belongs to the bacterial ribosomal protein bL35 family.

In Edwardsiella ictaluri (strain 93-146), this protein is Large ribosomal subunit protein bL35.